Consider the following 370-residue polypeptide: Pantothenate kinase 3 (370 aa).

E138 acts as the Proton acceptor in catalysis. 3 residues coordinate acetyl-CoA: S192, S195, and R207.

It belongs to the type II pantothenate kinase family. In terms of assembly, homodimer. Highly expressed in the liver.

Its subcellular location is the cytoplasm. The catalysed reaction is (R)-pantothenate + ATP = (R)-4'-phosphopantothenate + ADP + H(+). Its pathway is cofactor biosynthesis; coenzyme A biosynthesis; CoA from (R)-pantothenate: step 1/5. Subject to allosteric regulation, exists in two distinct conformational states, a catalytically incompetent (or open) conformation stabilized by the binding of acetyl(acyl)-CoA, and a catalytically competent (or closed) conformation stabilized by ATP-binding. Acetyl-CoA and its thioesters act as allosteric inhibitors and compete with the ATP-binding site. Strongly inhibited by acetyl-CoA, malonyl-CoA and palmitoyl CoA and modestly inhibited by CoA. Inhibited by calcium hopantenate. Catalyzes the phosphorylation of pantothenate to generate 4'-phosphopantothenate in the first and rate-determining step of coenzyme A (CoA) synthesis. In Mus musculus (Mouse), this protein is Pantothenate kinase 3 (Pank3).